Consider the following 362-residue polypeptide: Phosphoserine aminotransferase (362 aa).

Residues Ser-9 and Arg-42 each coordinate L-glutamate. Pyridoxal 5'-phosphate contacts are provided by residues 76–77 (GR), Trp-102, Thr-153, Asp-174, and Gln-197. Lys-198 carries the N6-(pyridoxal phosphate)lysine modification. Residue 239 to 240 (NT) coordinates pyridoxal 5'-phosphate.

This sequence belongs to the class-V pyridoxal-phosphate-dependent aminotransferase family. SerC subfamily. Homodimer. The cofactor is pyridoxal 5'-phosphate.

Its subcellular location is the cytoplasm. It carries out the reaction O-phospho-L-serine + 2-oxoglutarate = 3-phosphooxypyruvate + L-glutamate. It catalyses the reaction 4-(phosphooxy)-L-threonine + 2-oxoglutarate = (R)-3-hydroxy-2-oxo-4-phosphooxybutanoate + L-glutamate. The protein operates within amino-acid biosynthesis; L-serine biosynthesis; L-serine from 3-phospho-D-glycerate: step 2/3. It participates in cofactor biosynthesis; pyridoxine 5'-phosphate biosynthesis; pyridoxine 5'-phosphate from D-erythrose 4-phosphate: step 3/5. In terms of biological role, catalyzes the reversible conversion of 3-phosphohydroxypyruvate to phosphoserine and of 3-hydroxy-2-oxo-4-phosphonooxybutanoate to phosphohydroxythreonine. The protein is Phosphoserine aminotransferase of Escherichia coli O139:H28 (strain E24377A / ETEC).